The following is an 843-amino-acid chain: Pentatricopeptide repeat-containing protein At4g21880, mitochondrial (843 aa).

PPR repeat units follow at residues 392-426 (SSTS…GLVI), 427-461 (SANI…SVKP), 462-496 (NSET…NLAP), 497-531 (NSSM…DVKP), 532-562 (DSVT…AGVE), 564-594 (NKHV…LEVP), and 598-632 (HNEL…RCPV).

This sequence belongs to the PPR family. P subfamily.

It localises to the mitochondrion. The chain is Pentatricopeptide repeat-containing protein At4g21880, mitochondrial from Arabidopsis thaliana (Mouse-ear cress).